The chain runs to 391 residues: UPF0229 protein BCA_0588 (391 aa).

Polar residues predominate over residues 1–16 (MGEENQPNYTISQENW). 2 disordered regions span residues 1-31 (MGEE…RHQE) and 80-117 (HVGQ…GDAA). Basic and acidic residues predominate over residues 21–31 (KGYDDQQRHQE). A compositionally biased stretch (gly residues) spans 98-115 (GSGGQKQKGPGKGQGAGD).

Belongs to the UPF0229 family.

The protein is UPF0229 protein BCA_0588 of Bacillus cereus (strain 03BB102).